Reading from the N-terminus, the 786-residue chain is E3 ubiquitin-protein ligase pub3 (786 aa).

In terms of domain architecture, C2 spans 1–109 (MEQGAKRVRF…RSNREVSLTR (109 aa)). Disordered stretches follow at residues 134–225 (IRAP…NSNA) and 263–306 (TWTR…DSGN). Positions 142-193 (SSTTANRTTSTPTTTTARTTRTTPRPTATTNTSNQSTSNSTRNGTSAATSNG) are enriched in low complexity. Over residues 204-213 (HRSSPVTNRQ) the composition is skewed to polar residues. Over residues 214–225 (TNNTSALSNSNA) the composition is skewed to low complexity. A WW 1 domain is found at 236–269 (GRLPPGWERRADSLGRTYYVDHNTRTTTWTRPAS). 2 stretches are compositionally biased toward polar residues: residues 263–285 (TWTR…QRLN) and 295–305 (SNPSLMQSDSG). 2 WW domains span residues 306-339 (NDLP…DPRN) and 364-397 (GPLP…DPRL). Residues 453–786 (SAHDLKKRLM…VENTVGFGNE (334 aa)) form the HECT domain. Cysteine 754 serves as the catalytic Glycyl thioester intermediate.

It catalyses the reaction S-ubiquitinyl-[E2 ubiquitin-conjugating enzyme]-L-cysteine + [acceptor protein]-L-lysine = [E2 ubiquitin-conjugating enzyme]-L-cysteine + N(6)-ubiquitinyl-[acceptor protein]-L-lysine.. It participates in protein modification; protein ubiquitination. In terms of biological role, E3 ubiquitin-protein ligase which accepts ubiquitin from an E2 ubiquitin-conjugating enzyme in the form of a thioester and then directly transfers the ubiquitin to targeted substrates. The protein is E3 ubiquitin-protein ligase pub3 (pub3) of Schizosaccharomyces pombe (strain 972 / ATCC 24843) (Fission yeast).